Here is a 132-residue protein sequence, read N- to C-terminus: Replication enhancer protein (132 aa).

The protein belongs to the geminiviridae replication enhancer protein family. In terms of assembly, homooligomer. Interacts with the replication-associated protein (REP). Interacts with host proliferating cell nuclear antigen (PCNA). Interacts with host retinoblastoma-related protein 1 (RBR1), and may thereby deregulate the host cell cycle. Oligomerization and interaction with PCNA are necessary for optimal replication enhancement.

Its function is as follows. Increases viral DNA accumulation. Enhances infectivity and symptom expression. The protein is Replication enhancer protein of Pepper huasteco yellow vein virus (PHYVV).